The primary structure comprises 613 residues: 4-hydroxy-3-methylbut-2-en-1-yl diphosphate synthase (flavodoxin) (613 aa).

[4Fe-4S] cluster-binding residues include C514, C517, C548, and E555.

It belongs to the IspG family. [4Fe-4S] cluster is required as a cofactor.

It carries out the reaction (2E)-4-hydroxy-3-methylbut-2-enyl diphosphate + oxidized [flavodoxin] + H2O + 2 H(+) = 2-C-methyl-D-erythritol 2,4-cyclic diphosphate + reduced [flavodoxin]. Its pathway is isoprenoid biosynthesis; isopentenyl diphosphate biosynthesis via DXP pathway; isopentenyl diphosphate from 1-deoxy-D-xylulose 5-phosphate: step 5/6. Its function is as follows. Converts 2C-methyl-D-erythritol 2,4-cyclodiphosphate (ME-2,4cPP) into 1-hydroxy-2-methyl-2-(E)-butenyl 4-diphosphate. The protein is 4-hydroxy-3-methylbut-2-en-1-yl diphosphate synthase (flavodoxin) of Chlamydia pneumoniae (Chlamydophila pneumoniae).